The sequence spans 355 residues: Heavy metal-associated isoprenylated plant protein 7 (355 aa).

Basic and acidic residues predominate over residues 1-58; the sequence is MGEEEKKPEAAEEKKMEEKKPEEKKEGEDKKVDAEKKGEDSDKKPQEGESNKDSKEDS. Residues 1–74 are disordered; it reads MGEEEKKPEA…APAPPPPPQE (74 aa). Pro residues predominate over residues 63–73; that stretch reads PEAPAPPPPPQ. 2 consecutive HMA domains span residues 72-136 and 170-234; these read PQEV…HRQV and VVTV…KHAA. A metal cation is bound by residues Cys83 and Cys86. The disordered stretch occupies residues 132–157; the sequence is THRQVQLLSPIPPPPPPPEKKAEEDK. A metal cation contacts are provided by Cys181 and Cys184. The tract at residues 235 to 308 is disordered; it reads IMKIDPPPPP…GGGEEEGKVV (74 aa). The segment covering 254–293 has biased composition (basic and acidic residues); that stretch reads EGEKKEEEKGEGESKGEEGKDDKAKTDEEKKEGDGGKGEG. Cys352 is modified (cysteine methyl ester). A lipid anchor (S-farnesyl cysteine) is attached at Cys352. Residues 353 to 355 constitute a propeptide, removed in mature form; the sequence is TVM.

The protein belongs to the HIPP family. Post-translationally, efficiently farnesylated in vitro.

Functionally, heavy-metal-binding protein. Binds zinc, copper and nickel in a reversible manner. This is Heavy metal-associated isoprenylated plant protein 7 from Arabidopsis thaliana (Mouse-ear cress).